A 209-amino-acid polypeptide reads, in one-letter code: Putative 3-methyladenine DNA glycosylase (209 aa).

Belongs to the DNA glycosylase MPG family.

This is Putative 3-methyladenine DNA glycosylase from Deinococcus geothermalis (strain DSM 11300 / CIP 105573 / AG-3a).